The chain runs to 322 residues: Homoserine kinase (322 aa).

106-116 (ALSSGMGGSAA) is a binding site for ATP.

This sequence belongs to the GHMP kinase family. Homoserine kinase subfamily.

It localises to the cytoplasm. The catalysed reaction is L-homoserine + ATP = O-phospho-L-homoserine + ADP + H(+). The protein operates within amino-acid biosynthesis; L-threonine biosynthesis; L-threonine from L-aspartate: step 4/5. In terms of biological role, catalyzes the ATP-dependent phosphorylation of L-homoserine to L-homoserine phosphate. The polypeptide is Homoserine kinase (Xanthomonas campestris pv. campestris (strain B100)).